The primary structure comprises 599 residues: MSLLKIYWRAMQYLAVERTATITMCVASVLVALVTLAEPVLFGRVIQSISDKGDIFSPLLMWAALGGFNIMAAVFVARGADRLAHRRRLGVMIDSYERLITMPLAWHQKRGTSNALHTLIRATDSLFTLWLEFMRQHLTTVVALATLIPVAMTMDMRMSLVLIVLGVIYVMIGQLVMRKTKDGQAAVEKHHHKLFEHVSDTISNVSVVQSYNRIASETQALRDYAKNLENAQFPVLNWWALASGLNRMASTFSMVVVLVLGAYFVTKGQMRVGDVIAFIGFAQLMIGRLDQISAFINQTVTARAKLEEFFQMEDATADRQEPENVADLNDVKGDIVFDNVTFEFPNSGQGIYDVSFEVKPGQTVAIVGPTGAGKTTLINLLQRVFDPAAGRIMIDGTDTRTVSRRSLRHAIATVFQDAGLFNRSVEDNIRVGRANATHEEVHAAAKAAAAHDFILAKSEGYDTFVGERGSQLSGGERQRLAIARAILKDSPILVLDEATSALDVETEEKVKQAVDELSHNRTTFIIAHRLSTVRSADLVLFMDKGHLVESGSFNELAERGGRFSDLLRAGGLKLEDKQPKQPVVEGSNVMPFPVKGAVA.

The ABC transmembrane type-1 domain occupies 21 to 301 (TITMCVASVL…ISAFINQTVT (281 aa)). 5 helical membrane-spanning segments follow: residues 22-42 (ITMC…PVLF), 55-75 (IFSP…AAVF), 156-176 (MRMS…GQLV), 248-268 (MAST…VTKG), and 276-296 (IAFI…SAFI). The ABC transporter domain occupies 335–569 (IVFDNVTFEF…GGRFSDLLRA (235 aa)). 368–375 (GPTGAGKT) contacts ATP.

This sequence belongs to the ABC transporter superfamily. Beta-(1--&gt;2)glucan exporter (TC 3.A.1.108.1) family. Homodimer.

Its subcellular location is the cell inner membrane. The enzyme catalyses [(1-&gt;2)-beta-D-glucosyl](n)(in) + ATP + H2O = [(1-&gt;2)-beta-D-glucosyl](n)(out) + ADP + phosphate + H(+). Functionally, involved in beta-(1--&gt;2)glucan export. Transmembrane domains (TMD) form a pore in the inner membrane and the ATP-binding domain (NBD) is responsible for energy generation. This is Beta-(1--&gt;2)glucan export ATP-binding/permease protein NdvA from Brucella suis biovar 1 (strain 1330).